The following is a 631-amino-acid chain: 1-deoxy-D-xylulose-5-phosphate synthase (631 aa).

Residues H87 and 128 to 130 (GHS) each bind thiamine diphosphate. D159 serves as a coordination point for Mg(2+). Residues 160–161 (GA), N188, F295, and E377 each bind thiamine diphosphate. N188 is a binding site for Mg(2+).

Belongs to the transketolase family. DXPS subfamily. In terms of assembly, homodimer. Mg(2+) serves as cofactor. It depends on thiamine diphosphate as a cofactor.

It catalyses the reaction D-glyceraldehyde 3-phosphate + pyruvate + H(+) = 1-deoxy-D-xylulose 5-phosphate + CO2. Its pathway is metabolic intermediate biosynthesis; 1-deoxy-D-xylulose 5-phosphate biosynthesis; 1-deoxy-D-xylulose 5-phosphate from D-glyceraldehyde 3-phosphate and pyruvate: step 1/1. Its function is as follows. Catalyzes the acyloin condensation reaction between C atoms 2 and 3 of pyruvate and glyceraldehyde 3-phosphate to yield 1-deoxy-D-xylulose-5-phosphate (DXP). The protein is 1-deoxy-D-xylulose-5-phosphate synthase of Pseudomonas putida (strain ATCC 47054 / DSM 6125 / CFBP 8728 / NCIMB 11950 / KT2440).